A 298-amino-acid polypeptide reads, in one-letter code: Fluorinase (298 aa).

Residues Asp-14, 19–21 (DDS), Tyr-75, Ser-156, Asp-209, Asn-214, 268–269 (SR), and 276–278 (RNA) each bind S-adenosyl-L-methionine.

It belongs to the SAM hydrolase / SAM-dependent halogenase family.

It carries out the reaction fluoride + S-adenosyl-L-methionine = 5'-deoxy-5'-fluoroadenosine + L-methionine. In terms of biological role, catalyzes the formation of a C-F bond by combining S-adenosyl-L-methionine (SAM) and fluoride to generate 5'-fluoro-5'-deoxyadenosine (5'-FDA) and L-methionine. This is Fluorinase from Actinoplanes sp. (strain N902-109).